Here is an 889-residue protein sequence, read N- to C-terminus: MTTFLNINQIRTTFIEFFKKYGHHHASSSSLVPGNDPSLFFVNAGIVQFKDYVRAPETSKYSRVVTCQKCVRAGGKHNDLESVGYTARHHTFFEMLGNFSFGEDNAKADFMQLIWNFLTKELFIDEDRLIVTVYHTDHETAKLWRSIAGLDDSRIIRIKTDDNFWSMGPVGPCGPCTEIFYDHGDKIPGGLPGTKDENGGRYVEIWNIVFMQYEQLNESTRVELAKRCIDTGAGLERIATVLQGVYDNYDIDLFKNLIANIEHLTKIKSVGEANFSHRIIADHLRASAFLIADGVMPSNDGRGYVLRRIMRRAMNQIHQLGCKEPVMHLLVQGLINEMGDFYKELRVRQELITYLLKNEEEKFKTTLSKGLKLLEEESKNLTSGSQLSGHIAFKLYDTYGFPFDLTQDILKKRSISINKTEFDQNMLEQQNRARQLWKGQGSNKEQLLWEKLKEEFRATEFVGYSLCQAEGIVVSLIQDNQYVEYIDINQVDDNNKEFWLITNQTPFYGQSGGQIGDIGIIKNNECTIHVTDTIKLFGCTHVHICKIVSGKINLNAVVHMAIDKQYRTQLQIHHSATHILHAALREILGNHIIQKGSLVAYDYLRFDVSHPTSISKDLLTKIENRVNEIILNNTAVKLRIMPFDQAIAHGAVALFEEKYGDEVRAISIGETSDARYYSFELCGGTHVKYTGDIGAFRILSESAIAAGVRRIEAIAGKHVIKQARQNSELLDLIAEKFSVTKQTIMSKIDGIIEENNLLKKQLHQLKYNQLILCEKDIQNMADNIGKIKLVYKNIEDYDLQIVRKAVSNTTKNIQNLVMVVISNNDKKSTIIIGVSDNITNKIQANNLVKEIINYIGGSGGGSATLAQIGCQYTSKLLDLKNIICKLLAT.

Zn(2+) is bound by residues histidine 574, histidine 578, cysteine 682, and histidine 686.

It belongs to the class-II aminoacyl-tRNA synthetase family. Requires Zn(2+) as cofactor.

It is found in the cytoplasm. It catalyses the reaction tRNA(Ala) + L-alanine + ATP = L-alanyl-tRNA(Ala) + AMP + diphosphate. In terms of biological role, catalyzes the attachment of alanine to tRNA(Ala) in a two-step reaction: alanine is first activated by ATP to form Ala-AMP and then transferred to the acceptor end of tRNA(Ala). Also edits incorrectly charged Ser-tRNA(Ala) and Gly-tRNA(Ala) via its editing domain. This chain is Alanine--tRNA ligase, found in Orientia tsutsugamushi (strain Ikeda) (Rickettsia tsutsugamushi).